A 66-amino-acid polypeptide reads, in one-letter code: Cold shock protein CspD (66 aa).

A CSD domain is found at 4–63 (GKVKWFNNEKGFGFIEVEGGDDVFVHFTAIEGDGYKSLEEGQEVSFEIVEGNRGPQASNV).

Its subcellular location is the cytoplasm. This is Cold shock protein CspD (cspD) from Bacillus subtilis (strain 168).